A 201-amino-acid chain; its full sequence is Ras-related protein RabA (201 aa).

15 to 22 (GDSGVGKS) contributes to the GTP binding site. An Effector region motif is present at residues 37 to 45 (YISTIGVDF). Residues 63–67 (DTAGQ) and 121–124 (NKSD) contribute to the GTP site. Cysteine 198 carries the cysteine methyl ester modification. Cysteine 198 is lipidated: S-geranylgeranyl cysteine. Positions 199-201 (IIN) are cleaved as a propeptide — removed in mature form.

The protein belongs to the small GTPase superfamily. Rab family.

The protein resides in the cell membrane. This chain is Ras-related protein RabA (rabA), found in Dictyostelium discoideum (Social amoeba).